Consider the following 359-residue polypeptide: 3-dehydroquinate synthase (359 aa).

NAD(+) is bound by residues 70–75 (DGEQYK), 105–109 (GVIGD), 129–130 (TT), K142, K151, and 169–172 (FYKT). Residues E184, H247, and H264 each coordinate Zn(2+).

It belongs to the sugar phosphate cyclases superfamily. Dehydroquinate synthase family. It depends on Co(2+) as a cofactor. Requires Zn(2+) as cofactor. The cofactor is NAD(+).

It is found in the cytoplasm. The catalysed reaction is 7-phospho-2-dehydro-3-deoxy-D-arabino-heptonate = 3-dehydroquinate + phosphate. Its pathway is metabolic intermediate biosynthesis; chorismate biosynthesis; chorismate from D-erythrose 4-phosphate and phosphoenolpyruvate: step 2/7. In terms of biological role, catalyzes the conversion of 3-deoxy-D-arabino-heptulosonate 7-phosphate (DAHP) to dehydroquinate (DHQ). The polypeptide is 3-dehydroquinate synthase (Francisella tularensis subsp. holarctica (strain OSU18)).